Here is a 230-residue protein sequence, read N- to C-terminus: Large ribosomal subunit protein uL1 (230 aa).

It belongs to the universal ribosomal protein uL1 family. As to quaternary structure, part of the 50S ribosomal subunit.

Binds directly to 23S rRNA. The L1 stalk is quite mobile in the ribosome, and is involved in E site tRNA release. In terms of biological role, protein L1 is also a translational repressor protein, it controls the translation of the L11 operon by binding to its mRNA. The sequence is that of Large ribosomal subunit protein uL1 from Desulforapulum autotrophicum (strain ATCC 43914 / DSM 3382 / VKM B-1955 / HRM2) (Desulfobacterium autotrophicum).